Reading from the N-terminus, the 127-residue chain is uncharacterized protein (127 aa).

Residues 1–24 are disordered; the sequence is PLKTKPIDNNLPHRTGYNQASKQQ.

This is an uncharacterized protein from Homo sapiens (Human).